A 274-amino-acid chain; its full sequence is Large ribosomal subunit protein uL2cz/uL2cy (274 aa).

Residues 224–253 form a disordered region; sequence NPIDHPHGGGEGRAPIGRKKPTTPWGYPAL.

Belongs to the universal ribosomal protein uL2 family. As to quaternary structure, part of the 50S ribosomal subunit.

The protein resides in the plastid. In Epifagus virginiana (Beechdrops), this protein is Large ribosomal subunit protein uL2cz/uL2cy (rpl2-A).